A 227-amino-acid polypeptide reads, in one-letter code: Cytidylate kinase (227 aa).

Position 12–20 (12–20 (GPSGAGKGT)) interacts with ATP.

It belongs to the cytidylate kinase family. Type 1 subfamily.

The protein localises to the cytoplasm. The enzyme catalyses CMP + ATP = CDP + ADP. The catalysed reaction is dCMP + ATP = dCDP + ADP. The protein is Cytidylate kinase of Shigella sonnei (strain Ss046).